An 808-amino-acid chain; its full sequence is Protein SEY1 (808 aa).

A disordered region spans residues 1–21; the sequence is MSSELSEGELSHTSSSSSFVP. Over 1 to 701 the chain is Cytoplasmic; that stretch reads MSSELSEGEL…KRSIVQHITQ (701 aa). In terms of domain architecture, GB1/RHD3-type G spans 57 to 286; sequence GNNYHIISVF…VGDELFKPEY (230 aa). 67–74 lines the GTP pocket; it reads GSQSTGKS. The chain crosses the membrane as a helical span at residues 702 to 722; that stretch reads IPYYIYLVIVFLGWNEFMAII. Topologically, residues 723-725 are lumenal; sequence RNP. A helical membrane pass occupies residues 726 to 746; the sequence is LLFSLALLLGASVYILYKLNL. The Cytoplasmic segment spans residues 747–808; it reads LKPAIVVAQR…YSDNIELDDM (62 aa).

It belongs to the TRAFAC class dynamin-like GTPase superfamily. GB1/RHD3 GTPase family. RHD3 subfamily.

It localises to the endoplasmic reticulum membrane. Functionally, cooperates with the reticulon proteins and tubule-shaping DP1 family proteins to generate and maintain the structure of the tubular endoplasmic reticulum network. Has GTPase activity, which is required for its function in ER organization. This is Protein SEY1 from Candida tropicalis (strain ATCC MYA-3404 / T1) (Yeast).